The sequence spans 355 residues: Septin-2B (355 aa).

The Septin-type G domain occupies 33–305 (KGFEFTLMVV…ENFRSERLKK (273 aa)). Residues 43 to 50 (GESGLGKS) form a G1 motif region. GTP contacts are provided by residues 43–50 (GESGLGKS), Thr77, Gly103, 182–190 (KADTLTLRE), Gly240, and Arg255. Residues 100–103 (DTPG) are G3 motif. The tract at residues 181–184 (AKAD) is G4 motif. Positions 259-269 (WGVVEVENPEH) are important for dimerization.

The protein belongs to the TRAFAC class TrmE-Era-EngA-EngB-Septin-like GTPase superfamily. Septin GTPase family. In terms of assembly, septins polymerize into heterooligomeric protein complexes that form filaments, and associate with cellular membranes, actin filaments and microtubules. GTPase activity is required for filament formation. Can form heterooligomers with other family members and form filaments. Interacts with wdpcp.

Its subcellular location is the cytoplasm. The protein localises to the cytoskeleton. The protein resides in the spindle. It localises to the cleavage furrow. It is found in the midbody. Its subcellular location is the cell cortex. The protein localises to the cell projection. The protein resides in the cilium membrane. Functionally, filament-forming cytoskeletal GTPase. Required for normal organization of the actin cytoskeleton. Plays a role in the biogenesis of polarized columnar-shaped epithelium. Required for the progression through mitosis through regulation of chromosome congression. During anaphase, may be required for chromosome segregation and spindle elongation. Plays a role in ciliogenesis and collective cell movements including convergent extension during gastrulation. In cilia, required for the integrity of the diffusion barrier at the base of the primary cilium that prevents diffusion of transmembrane proteins between the cilia and plasma membranes. Controls cell shape and not polarization of cells during convergent extension. The protein is Septin-2B (sept2-B) of Xenopus tropicalis (Western clawed frog).